Here is an 84-residue protein sequence, read N- to C-terminus: Toxin-like TcoNTxP1 (84 aa).

Positions M1–G19 are cleaved as a signal peptide. The region spanning K21–G82 is the LCN-type CS-alpha/beta domain. Disulfide bonds link C31/C81, C35/C57, C43/C62, and C47/C64. C81 carries the cysteine amide modification. Residues G82 to K84 constitute a propeptide that is removed on maturation.

Expressed by the venom gland.

Its subcellular location is the secreted. Its function is as follows. This protein is not toxic. It induces an immune response similar to that induced by whole venom. Thus, polyclonal antibodies raised against this protein can neutralize the effects of the venom. The sequence is that of Toxin-like TcoNTxP1 from Tityus costatus (Brazilian scorpion).